Consider the following 123-residue polypeptide: Small ribosomal subunit protein uS17 (123 aa).

The protein belongs to the universal ribosomal protein uS17 family. In terms of assembly, part of the 30S ribosomal subunit.

In terms of biological role, one of the primary rRNA binding proteins, it binds specifically to the 5'-end of 16S ribosomal RNA. The protein is Small ribosomal subunit protein uS17 of Pyrobaculum aerophilum (strain ATCC 51768 / DSM 7523 / JCM 9630 / CIP 104966 / NBRC 100827 / IM2).